Consider the following 312-residue polypeptide: Homoserine O-succinyltransferase (312 aa).

Catalysis depends on C142, which acts as the Acyl-thioester intermediate. The substrate site is built by K163 and S192. The active-site Proton acceptor is H235. E237 is an active-site residue. A substrate-binding site is contributed by R249.

Belongs to the MetA family.

The protein localises to the cytoplasm. It catalyses the reaction L-homoserine + succinyl-CoA = O-succinyl-L-homoserine + CoA. The protein operates within amino-acid biosynthesis; L-methionine biosynthesis via de novo pathway; O-succinyl-L-homoserine from L-homoserine: step 1/1. Functionally, transfers a succinyl group from succinyl-CoA to L-homoserine, forming succinyl-L-homoserine. The sequence is that of Homoserine O-succinyltransferase from Shewanella halifaxensis (strain HAW-EB4).